Here is a 264-residue protein sequence, read N- to C-terminus: 1H-3-hydroxy-4-oxoquinoline 2,4-dioxygenase (264 aa).

Substrate is bound by residues 30–32 (WCQ), 94–95 (TS), and W153. The active-site Proton donor/acceptor is the H244.

It belongs to the AB hydrolase superfamily. None. Contrary to most other dioxygenases, this enzyme does not require a cofactor for catalysis. is required as a cofactor.

The enzyme catalyses 3-hydroxy-1H-quinolin-4-one + O2 = N-formylanthranilate + CO + H(+). Functionally, ring-cleaving dioxygenase involved in oxoquinoline degradation and utilization. The polypeptide is 1H-3-hydroxy-4-oxoquinoline 2,4-dioxygenase (qdo) (Pseudomonas putida (Arthrobacter siderocapsulatus)).